A 728-amino-acid polypeptide reads, in one-letter code: Catalase-peroxidase 1 (728 aa).

A cross-link (tryptophyl-tyrosyl-methioninium (Trp-Tyr) (with M-244)) is located at residues 91–218; that stretch reads WHSAGTYRTA…LAAVQMGLIY (128 aa). Catalysis depends on H92, which acts as the Proton acceptor. The tryptophyl-tyrosyl-methioninium (Tyr-Met) (with W-91) cross-link spans 218 to 244; the sequence is YVNPEGPDGNPDPVAAAHDIRETFARM. H259 provides a ligand contact to heme b.

The protein belongs to the peroxidase family. Peroxidase/catalase subfamily. As to quaternary structure, homodimer or homotetramer. It depends on heme b as a cofactor. Post-translationally, formation of the three residue Trp-Tyr-Met cross-link is important for the catalase, but not the peroxidase activity of the enzyme.

It catalyses the reaction H2O2 + AH2 = A + 2 H2O. It carries out the reaction 2 H2O2 = O2 + 2 H2O. Bifunctional enzyme with both catalase and broad-spectrum peroxidase activity. The sequence is that of Catalase-peroxidase 1 from Burkholderia cenocepacia (strain HI2424).